We begin with the raw amino-acid sequence, 711 residues long: Acyl-CoA dehydrogenase FadE34 (711 aa).

It belongs to the acyl-CoA dehydrogenase family. Homodimer. FAD is required as a cofactor.

It carries out the reaction 3-oxochol-4-en-24-oyl-CoA + A = (22E)-3-oxochola-4,22-dien-24-oyl-CoA + AH2. The catalysed reaction is 3beta-hydroxy-chol-5-ene-24-oyl-CoA + A = 3beta-hydroxy-chol-5,22-dien-24-oyl-CoA + AH2. The protein operates within steroid metabolism; cholesterol degradation. Its function is as follows. Involved in the second cycle of side chain dehydrogenation in the beta-oxidation of cholesterol catabolism. It contributes partly to the virulence by increasing the efficiency of beta-oxidation. Catalyzes the dehydrogenation of the five-carbon steroid side chain of 3-oxo-chol-4-en-24-oyl-CoA (3-OCO-CoA) to yield 3-oxochol-4,22-dien-24-oyl-CoA. Can also use 3beta-hydroxy-chol-5-ene-24-oyl-CoA, and shows weak activity with cholyl-CoA and deoxycholyl-CoA. This is Acyl-CoA dehydrogenase FadE34 (fadE34) from Mycobacterium tuberculosis (strain ATCC 25618 / H37Rv).